Consider the following 1356-residue polypeptide: Fibronectin type III domain containing protein 3C1 (1356 aa).

Disordered regions lie at residues 303-341 (PRNM…SDNN), 356-402 (TYDE…SDVA), and 428-452 (NQKK…QPGC). The segment covering 308 to 341 (DNIPDTNTTDTITSSSAHTPSISTSNATFCSDNN) has biased composition (low complexity). Residues 370-393 (PSCTSQSASNPSVSENAHNPSSIN) are compositionally biased toward polar residues. Positions 439–448 (LKEHNTEDRT) are enriched in basic and acidic residues. 4 Fibronectin type-III domains span residues 454-549 (NIEK…TPGC), 553-648 (PPLA…TPPA), 650-741 (LPPK…TRPA), and 745-842 (CPNK…TLPP). Residues 825–838 (GQSRPSDVLTIQTP) are compositionally biased toward polar residues. Residues 825–894 (GQSRPSDVLT…QDRKVHPSSE (70 aa)) are disordered. Over residues 883-894 (PHQDRKVHPSSE) the composition is skewed to basic and acidic residues. 4 consecutive Fibronectin type-III domains span residues 914 to 1007 (PPSQ…TPGT), 1017 to 1103 (EVES…TKPL), 1104 to 1199 (PPEP…TKSP), and 1202 to 1299 (ALKA…TYKH). The segment at 1299–1320 (HHSGHGKGSGSKGKGNHNDKGE) is disordered. Residues 1330-1350 (TFVLTLLIGFALIAVLCAVAV) form a helical membrane-spanning segment. Topologically, residues 1351–1356 (QYLLIN) are cytoplasmic.

Belongs to the FNDC3 family.

It is found in the membrane. This chain is Fibronectin type III domain containing protein 3C1 (Fndc3c1), found in Mus musculus (Mouse).